Here is a 427-residue protein sequence, read N- to C-terminus: MLVKADMTKDIAQVMAEVGRKAKAAAAPLSIATSEQKNKALNAAADAILEARADILEANRLDLANAEKNGMAASFVDRLTLNEARIDAIAEGIRAIATLPDPVGEVIAEWDRPNGLHIERVRTPLGVIGVIYESRPNVTADAGALCLKAGNAVILRGGSDSAHSSAAIYKALVKGLEAANLPADAIQIVPVTDRAAVGEMLKGLGGAIDVIVPRGGKSLVARVQSEARVPVFAHLEGICHLYIDKSADLDMARRIALDAKMRRTGICGAAETLLVDRAVASTHLAPILGDLAAGGCEIRGSAEVLALYPAAKPATEEDWSTEYLDAIISVALVDGISGAIDHINRYSSHHTEAIVAEDAQTVARFFNEIDSAILLHNASTQFADGGEFGMGAEIGIATGKMHARGPVGVEQLTSFKYRVRGSGQVRG.

The protein belongs to the gamma-glutamyl phosphate reductase family.

The protein resides in the cytoplasm. The enzyme catalyses L-glutamate 5-semialdehyde + phosphate + NADP(+) = L-glutamyl 5-phosphate + NADPH + H(+). Its pathway is amino-acid biosynthesis; L-proline biosynthesis; L-glutamate 5-semialdehyde from L-glutamate: step 2/2. Its function is as follows. Catalyzes the NADPH-dependent reduction of L-glutamate 5-phosphate into L-glutamate 5-semialdehyde and phosphate. The product spontaneously undergoes cyclization to form 1-pyrroline-5-carboxylate. In Brucella melitensis biotype 2 (strain ATCC 23457), this protein is Gamma-glutamyl phosphate reductase.